Here is a 119-residue protein sequence, read N- to C-terminus: Large ribosomal subunit protein uL24 (119 aa).

Belongs to the universal ribosomal protein uL24 family. As to quaternary structure, part of the 50S ribosomal subunit.

Functionally, one of two assembly initiator proteins, it binds directly to the 5'-end of the 23S rRNA, where it nucleates assembly of the 50S subunit. Its function is as follows. One of the proteins that surrounds the polypeptide exit tunnel on the outside of the subunit. This is Large ribosomal subunit protein uL24 from Clavibacter michiganensis subsp. michiganensis (strain NCPPB 382).